The chain runs to 224 residues: Urease accessory protein UreF (224 aa).

Belongs to the UreF family. In terms of assembly, ureD, UreF and UreG form a complex that acts as a GTP-hydrolysis-dependent molecular chaperone, activating the urease apoprotein by helping to assemble the nickel containing metallocenter of UreC. The UreE protein probably delivers the nickel.

Its subcellular location is the cytoplasm. In terms of biological role, required for maturation of urease via the functional incorporation of the urease nickel metallocenter. In Pseudomonas savastanoi pv. phaseolicola (strain 1448A / Race 6) (Pseudomonas syringae pv. phaseolicola (strain 1448A / Race 6)), this protein is Urease accessory protein UreF.